Reading from the N-terminus, the 64-residue chain is Lectin-A (64 aa).

Chitin-binding type-1 domains follow at residues alanine 1–threonine 20 and aspartate 22–alanine 45.

In terms of processing, glycosylated.

Its function is as follows. N-acetyl-D-glucosamine binding lectin. Shows low hemagglutinating activity towards human erythrocytes. Has low mitogenic activity towards human peripheral blood lymphocytes. The sequence is that of Lectin-A from Phytolacca americana (American pokeweed).